The chain runs to 223 residues: Small ribosomal subunit protein uS3 (223 aa).

A KH type-2 domain is found at 39–108; that stretch reads IRNFVKKNSY…NILINIVEVK (70 aa).

This sequence belongs to the universal ribosomal protein uS3 family. As to quaternary structure, part of the 30S ribosomal subunit. Forms a tight complex with proteins S10 and S14.

Binds the lower part of the 30S subunit head. Binds mRNA in the 70S ribosome, positioning it for translation. In Clostridium botulinum (strain Okra / Type B1), this protein is Small ribosomal subunit protein uS3.